The following is a 142-amino-acid chain: ATP synthase epsilon chain (142 aa).

It belongs to the ATPase epsilon chain family. F-type ATPases have 2 components, CF(1) - the catalytic core - and CF(0) - the membrane proton channel. CF(1) has five subunits: alpha(3), beta(3), gamma(1), delta(1), epsilon(1). CF(0) has three main subunits: a, b and c.

It localises to the cell inner membrane. Produces ATP from ADP in the presence of a proton gradient across the membrane. The sequence is that of ATP synthase epsilon chain from Histophilus somni (strain 129Pt) (Haemophilus somnus).